Consider the following 492-residue polypeptide: Anthranilate synthase component 1 (492 aa).

L-tryptophan contacts are provided by residues S48 and 273–275 (PYM). 308–309 (GT) is a binding site for chorismate. A Mg(2+)-binding site is contributed by E335. Residues Y423, R443, 457–459 (GGG), and G459 each bind chorismate. E472 serves as a coordination point for Mg(2+).

Belongs to the anthranilate synthase component I family. Heterotetramer consisting of two non-identical subunits: a beta subunit (TrpG) and a large alpha subunit (TrpE). Mg(2+) is required as a cofactor.

It catalyses the reaction chorismate + L-glutamine = anthranilate + pyruvate + L-glutamate + H(+). The protein operates within amino-acid biosynthesis; L-tryptophan biosynthesis; L-tryptophan from chorismate: step 1/5. Feedback inhibited by tryptophan. In terms of biological role, part of a heterotetrameric complex that catalyzes the two-step biosynthesis of anthranilate, an intermediate in the biosynthesis of L-tryptophan. In the first step, the glutamine-binding beta subunit (TrpG) of anthranilate synthase (AS) provides the glutamine amidotransferase activity which generates ammonia as a substrate that, along with chorismate, is used in the second step, catalyzed by the large alpha subunit of AS (TrpE) to produce anthranilate. In the absence of TrpG, TrpE can synthesize anthranilate directly from chorismate and high concentrations of ammonia. This is Anthranilate synthase component 1 from Pseudomonas aeruginosa (strain ATCC 15692 / DSM 22644 / CIP 104116 / JCM 14847 / LMG 12228 / 1C / PRS 101 / PAO1).